Here is a 118-residue protein sequence, read N- to C-terminus: Waprin-Enh1 (118 aa).

A signal peptide spans 1–24 (MKTLTGLLLVGLLALWIGLPSTSS). 2 consecutive WAP domains span residues 25-72 (KILF…RSCR) and 74-118 (PPVL…RICK). Intrachain disulfides connect C30/C63, C40/C67, C50/C62, C56/C71, C81/C109, C88/C113, C96/C108, and C102/C117.

The protein belongs to the venom waprin family. Expressed by the venom gland.

It is found in the secreted. Damages membranes of susceptible bacteria. Has no hemolytic activity. Not toxic to mice. Does not inhibit the proteinases elastase and cathepsin G. This chain is Waprin-Enh1, found in Pseudoferania polylepis (Macleay's water snake).